Reading from the N-terminus, the 265-residue chain is NAD kinase 1 (265 aa).

D45 functions as the Proton acceptor in the catalytic mechanism. NAD(+) is bound by residues D45–G46, N122–E123, R148, D150, and A185.

Belongs to the NAD kinase family. A divalent metal cation serves as cofactor.

The protein resides in the cytoplasm. It catalyses the reaction NAD(+) + ATP = ADP + NADP(+) + H(+). Involved in the regulation of the intracellular balance of NAD and NADP, and is a key enzyme in the biosynthesis of NADP. Catalyzes specifically the phosphorylation on 2'-hydroxyl of the adenosine moiety of NAD to yield NADP. This chain is NAD kinase 1, found in Bacillus anthracis.